Consider the following 330-residue polypeptide: MQPSETVEMQEMAQPSGQQRDVEARVQSAPANHSHDAGCTEMFCIAMSYVLIFLTFPVSVFMCIKIVQEYQRAVVFRLGRLVPDVKGPGIFFIIPCIDTFLNIDLRVASYNVPSQEILSRDSVTVSVDAVVYFKVFDPITSVVGVGNATDSTKLLAQTTLRTILGTHTLSEILSDREKISADMKISLDEATEPWGIKVERVELRDVRLPSQMQRAMAAEAEATRDAGAKIIAAEGELRASAALAEAATIISKSEGAMQLRYLHTLNAISSEKTSTIIFPFPMEILGGISKVGSGGTSQNFPVQEMMNAALQSIQRQDTVPATASSSGSRL.

The span at 1–19 (MQPSETVEMQEMAQPSGQQ) shows a compositional bias: polar residues. Residues 1–27 (MQPSETVEMQEMAQPSGQQRDVEARVQ) form a disordered region. The chain crosses the membrane as a helical span at residues 42–62 (MFCIAMSYVLIFLTFPVSVFM).

Belongs to the band 7/mec-2 family.

The protein resides in the membrane. The protein is Stomatin-1 (sto-1) of Caenorhabditis elegans.